A 346-amino-acid polypeptide reads, in one-letter code: DNA-directed RNA polymerases I and III subunit RPAC1 (346 aa).

A2 is subject to N-acetylalanine.

It belongs to the archaeal Rpo3/eukaryotic RPB3 RNA polymerase subunit family. In terms of assembly, component of the RNA polymerase I and RNA polymerase III complexes consisting of at least 13 and 17 subunits, respectively. Pol I complex consists of a ten-subunit catalytic core composed of POLR1A/RPA1, POLR1B/RPA2, POLR1C/RPAC1, POLR1D/RPAC2, POLR1H/RPA12, POLR2E/RPABC1, POLR2F/RPABC2, POLR2H/RPABC3, POLR2K/RPABC4 and POLR2L/RPABC5; a mobile stalk subunit POLR1F/RPA43 protruding from the core and additional subunits homologous to general transcription factors POLR1E/RPA49 and POLR1G/RPA34. Part of Pol I pre-initiation complex (PIC), in which Pol I core assembles with RRN3 and promoter-bound UTBF and SL1/TIF-IB complex. Pol III complex consists of a ten-subunit catalytic core composed of POLR3A/RPC1, POLR3B/RPC2, POLR1C/RPAC1, POLR1D/RPAC2, POLR3K/RPC10, POLR2E/RPABC1, POLR2F/RPABC2, POLR2H/RPABC3, POLR2K/RPABC4 and POLR2L/RPABC5; a mobile stalk composed of two subunits POLR3H/RPC8 and CRCP/RPC9, protruding from the core and functioning primarily in transcription initiation; and additional subunits homologous to general transcription factors of the RNA polymerase II machinery, POLR3C/RPC3-POLR3F/RPC6-POLR3G/RPC7 heterotrimer required for transcription initiation and POLR3D/RPC4-POLR3E/RPC5 heterodimer involved in both transcription initiation and termination.

The protein resides in the nucleus. The protein localises to the cytoplasm. It localises to the cytosol. DNA-dependent RNA polymerase catalyzes the transcription of DNA into RNA using the four ribonucleoside triphosphates as substrates. Common component of RNA polymerases I and III which synthesize ribosomal RNA precursors and short non-coding RNAs including 5S rRNA, snRNAs, tRNAs and miRNAs, respectively. POLR1C/RPAC1 is part of the polymerase core and may function as a clamp element that moves to open and close the cleft. The sequence is that of DNA-directed RNA polymerases I and III subunit RPAC1 from Mus musculus (Mouse).